A 134-amino-acid polypeptide reads, in one-letter code: ATP synthase epsilon chain (134 aa).

The protein belongs to the ATPase epsilon chain family. F-type ATPases have 2 components, CF(1) - the catalytic core - and CF(0) - the membrane proton channel. CF(1) has five subunits: alpha(3), beta(3), gamma(1), delta(1), epsilon(1). CF(0) has three main subunits: a, b and c.

Its subcellular location is the cell membrane. Produces ATP from ADP in the presence of a proton gradient across the membrane. The protein is ATP synthase epsilon chain of Listeria monocytogenes serotype 4a (strain HCC23).